The following is a 598-amino-acid chain: Phospholipase B-like protein G (598 aa).

A signal peptide spans 1–24 (MIKSYYLFFIILIFLIFINNFILC). Asn-50, Asn-98, Asn-173, Asn-341, Asn-368, Asn-450, Asn-480, Asn-526, and Asn-576 each carry an N-linked (GlcNAc...) asparagine glycan.

It belongs to the phospholipase B-like family.

It is found in the secreted. Probable phospholipase. This Dictyostelium discoideum (Social amoeba) protein is Phospholipase B-like protein G (plbG).